The primary structure comprises 492 residues: ERAD-associated E3 ubiquitin-protein ligase HRD1A (492 aa).

At 1–3 the chain is on the cytoplasmic side; that stretch reads MIR. A helical membrane pass occupies residues 4–24; the sequence is LRTYAGLSFMATLAVIYHAFS. Residues 25-40 lie on the Lumenal side of the membrane; sequence SRGQFYPATVYLSTSK. The chain crosses the membrane as a helical span at residues 41–61; that stretch reads ISLVLLLNMCLVLMLSLWHLV. Residues 62–98 are Cytoplasmic-facing; the sequence is KFVFLGSLREAEVERLNEQAWRELMEILFAITIFRQD. The chain crosses the membrane as a helical span at residues 99–119; that stretch reads FSSGFLPLVVTLLLIKALHWL. Topologically, residues 120-135 are lumenal; the sequence is AQKRVEYIETTPSVSK. The helical transmembrane segment at 136–156 threads the bilayer; that stretch reads LSHFRIVSFMGFLLLVDSLFM. Residues 157-170 are Cytoplasmic-facing; sequence YSSIRHLIQSRQAS. A helical transmembrane segment spans residues 171 to 191; that stretch reads VSLFFSFEYMILATTTVAIFV. The Lumenal segment spans residues 192–221; sequence KYVFYVTDMLMDGQWEKKPVYTFYLELIRD. Residues 222 to 242 form a helical membrane-spanning segment; sequence LLHLSMYICFFFVIFMNYGVP. At 243-492 the chain is on the cytoplasmic side; it reads LHLLRELYET…KGKSVADAAE (250 aa). The RING-type; atypical zinc-finger motif lies at 292 to 330; the sequence is CIICREEMTNAKKLICGHLFHVHCLRSWLERQQTCPTCR. Disordered stretches follow at residues 339–379 and 470–492; these read ATSA…NSLS and ETRK…DAAE. The segment covering 351–378 has biased composition (low complexity); sequence QGSQQGTSSSGNQGSEISSSAGVSNNSL. Over residues 470 to 486 the composition is skewed to basic and acidic residues; that stretch reads ETRKPESAGEPENKGKS.

This sequence belongs to the HRD1 family.

Its subcellular location is the endoplasmic reticulum membrane. The enzyme catalyses S-ubiquitinyl-[E2 ubiquitin-conjugating enzyme]-L-cysteine + [acceptor protein]-L-lysine = [E2 ubiquitin-conjugating enzyme]-L-cysteine + N(6)-ubiquitinyl-[acceptor protein]-L-lysine.. It functions in the pathway protein modification; protein ubiquitination. In terms of biological role, probable component of the HRD1 ubiquitin ligase complex that mediates the rapid degradation of misfolded endoplasmic reticulum (ER) proteins, a process called ER-associated degradation (ERAD). Targets the misfolded LRR receptor kinase BRI1. Functions redundantly with HRD3B. This Arabidopsis thaliana (Mouse-ear cress) protein is ERAD-associated E3 ubiquitin-protein ligase HRD1A.